The primary structure comprises 488 residues: Solanidine UDP-glucose glucosyltransferase 1 (488 aa).

H23 functions as the Proton acceptor in the catalytic mechanism. H23 is an an anthocyanidin binding site. D127 acts as the Charge relay in catalysis. The UDP-alpha-D-glucose site is built by V352, Q354, H369, N373, S374, and E377. An an anthocyanidin-binding site is contributed by A392. Residues D393 and Q394 each contribute to the UDP-alpha-D-glucose site.

Belongs to the UDP-glycosyltransferase family. In terms of tissue distribution, expressed in the shoot apical meristem (SAM) and tuber.

It catalyses the reaction solasodine + UDP-alpha-D-glucose = solasodine 3-beta-D-glucoside + UDP + H(+). The catalysed reaction is solanidine + UDP-alpha-D-glucose = solanidine 3-O-beta-D-glucopyranoside + UDP + H(+). The enzyme catalyses tomatidine + UDP-alpha-D-glucose = tomatidine 3-O-beta-D-glucopyranoside + UDP + H(+). Glucosyltransferase involved in the glucosylation of the steroidal alkaloid aglycons solanidine, solasodine and tomatidine to produce their corresponding glycoalkaloids. This chain is Solanidine UDP-glucose glucosyltransferase 1, found in Solanum tuberosum (Potato).